The sequence spans 102 residues: Large ribosomal subunit protein uL24 (102 aa).

Belongs to the universal ribosomal protein uL24 family. In terms of assembly, part of the 50S ribosomal subunit.

Functionally, one of two assembly initiator proteins, it binds directly to the 5'-end of the 23S rRNA, where it nucleates assembly of the 50S subunit. In terms of biological role, one of the proteins that surrounds the polypeptide exit tunnel on the outside of the subunit. The chain is Large ribosomal subunit protein uL24 from Alcanivorax borkumensis (strain ATCC 700651 / DSM 11573 / NCIMB 13689 / SK2).